The chain runs to 403 residues: Phosphopentomutase (403 aa).

Mn(2+) contacts are provided by Asp-13, Asp-298, His-303, Asp-339, His-340, and His-351.

It belongs to the phosphopentomutase family. Requires Mn(2+) as cofactor.

The protein resides in the cytoplasm. The enzyme catalyses 2-deoxy-alpha-D-ribose 1-phosphate = 2-deoxy-D-ribose 5-phosphate. It catalyses the reaction alpha-D-ribose 1-phosphate = D-ribose 5-phosphate. Its pathway is carbohydrate degradation; 2-deoxy-D-ribose 1-phosphate degradation; D-glyceraldehyde 3-phosphate and acetaldehyde from 2-deoxy-alpha-D-ribose 1-phosphate: step 1/2. Functionally, isomerase that catalyzes the conversion of deoxy-ribose 1-phosphate (dRib-1-P) and ribose 1-phosphate (Rib-1-P) to deoxy-ribose 5-phosphate (dRib-5-P) and ribose 5-phosphate (Rib-5-P), respectively. The polypeptide is Phosphopentomutase (Streptococcus equi subsp. zooepidemicus (strain MGCS10565)).